The sequence spans 154 residues: Myoglobin (154 aa).

One can recognise a Globin domain in the interval 2 to 148 (GLSDGEWQLV…FRNDMAAKYK (147 aa)). Serine 4 is subject to Phosphoserine. Histidine 65 contributes to the nitrite binding site. O2 is bound at residue histidine 65. Residue threonine 68 is modified to Phosphothreonine. Histidine 94 lines the heme b pocket.

The protein belongs to the globin family. As to quaternary structure, monomeric.

The protein resides in the cytoplasm. Its subcellular location is the sarcoplasm. The catalysed reaction is Fe(III)-heme b-[protein] + nitric oxide + H2O = Fe(II)-heme b-[protein] + nitrite + 2 H(+). It carries out the reaction H2O2 + AH2 = A + 2 H2O. Functionally, monomeric heme protein which primary function is to store oxygen and facilitate its diffusion within muscle tissues. Reversibly binds oxygen through a pentacoordinated heme iron and enables its timely and efficient release as needed during periods of heightened demand. Depending on the oxidative conditions of tissues and cells, and in addition to its ability to bind oxygen, it also has a nitrite reductase activity whereby it regulates the production of bioactive nitric oxide. Under stress conditions, like hypoxia and anoxia, it also protects cells against reactive oxygen species thanks to its pseudoperoxidase activity. This is Myoglobin (MB) from Sus scrofa (Pig).